A 504-amino-acid chain; its full sequence is UDP-glycosyltransferase UGT4 (504 aa).

Residues 1-23 (MTLLRDLLLLYINSLLFINPSIG) form the signal peptide. Over 24 to 474 (ENILVFLPTK…SAVIDLYWFQ (451 aa)) the chain is Lumenal. Asparagine 54, asparagine 66, asparagine 69, and asparagine 422 each carry an N-linked (GlcNAc...) asparagine glycan. Residues 475-495 (YILLDIILFYSLIVLILLCIL) traverse the membrane as a helical segment. The Cytoplasmic segment spans residues 496–504 (RIFFRMLTK).

This sequence belongs to the UDP-glycosyltransferase family.

It is found in the microsome membrane. Its function is as follows. Catalyzes the transfer of a glycosyl group from a UDP-sugar to an acceptor molecule. This Dactylopius coccus (Cochineal) protein is UDP-glycosyltransferase UGT4.